The following is a 112-amino-acid chain: Large ribosomal subunit protein eL30 (112 aa).

The protein belongs to the eukaryotic ribosomal protein eL30 family. Expressed in roots and leaves.

The chain is Large ribosomal subunit protein eL30 from Triticum aestivum (Wheat).